A 310-amino-acid polypeptide reads, in one-letter code: Tryptophan 2,3-dioxygenase (310 aa).

The disordered stretch occupies residues 1 to 39 (MQPPGNDAPAGCPFSGARAQGTQAAHEAPHVPGDAGEQA). Substrate contacts are provided by residues 79–83 (FIIQH), Tyr141, and Arg145. His268 provides a ligand contact to heme. Position 282 (Thr282) interacts with substrate.

This sequence belongs to the tryptophan 2,3-dioxygenase family. In terms of assembly, homotetramer. Heme serves as cofactor.

The catalysed reaction is L-tryptophan + O2 = N-formyl-L-kynurenine. The protein operates within amino-acid degradation; L-tryptophan degradation via kynurenine pathway; L-kynurenine from L-tryptophan: step 1/2. Heme-dependent dioxygenase that catalyzes the oxidative cleavage of the L-tryptophan (L-Trp) pyrrole ring and converts L-tryptophan to N-formyl-L-kynurenine. Catalyzes the oxidative cleavage of the indole moiety. The chain is Tryptophan 2,3-dioxygenase from Burkholderia multivorans (strain ATCC 17616 / 249).